The sequence spans 361 residues: Hydroxymethylglutaryl-CoA synthase (361 aa).

Residue glutamate 92 is the Proton donor/acceptor of the active site. Catalysis depends on cysteine 124, which acts as the Acyl-thioester intermediate. Residues cysteine 124, serine 165, threonine 214, and histidine 247 each contribute to the (3S)-3-hydroxy-3-methylglutaryl-CoA site. Histidine 247 acts as the Proton donor/acceptor in catalysis. Residue lysine 252 coordinates CoA. Positions 256, 279, and 309 each coordinate (3S)-3-hydroxy-3-methylglutaryl-CoA.

It belongs to the thiolase-like superfamily. Archaeal HMG-CoA synthase family. In terms of assembly, interacts with acetoacetyl-CoA thiolase that catalyzes the precedent step in the pathway and with a DUF35 protein. The acetoacetyl-CoA thiolase/HMG-CoA synthase complex channels the intermediate via a fused CoA-binding site, which allows for efficient coupling of the endergonic thiolase reaction with the exergonic HMGCS reaction.

It catalyses the reaction acetoacetyl-CoA + acetyl-CoA + H2O = (3S)-3-hydroxy-3-methylglutaryl-CoA + CoA + H(+). The protein operates within metabolic intermediate biosynthesis; (R)-mevalonate biosynthesis; (R)-mevalonate from acetyl-CoA: step 2/3. Catalyzes the condensation of acetyl-CoA with acetoacetyl-CoA to form 3-hydroxy-3-methylglutaryl-CoA (HMG-CoA). Functions in the mevalonate (MVA) pathway leading to isopentenyl diphosphate (IPP), a key precursor for the biosynthesis of isoprenoid compounds that are building blocks of archaeal membrane lipids. This Aeropyrum pernix (strain ATCC 700893 / DSM 11879 / JCM 9820 / NBRC 100138 / K1) protein is Hydroxymethylglutaryl-CoA synthase.